Reading from the N-terminus, the 106-residue chain is MVNVPKTRRTFCKKCGKHQPHKVTQYKKGKDSLYAQGRRRYDRKQSGYGGQTKPIFRKKAKTTKKIVLRLECVEPNCRSKRMLAIKRCKHFELGGDKKRKGQVIQF.

A disordered region spans residues 26–53; it reads YKKGKDSLYAQGRRRYDRKQSGYGGQTK. An N6-methyllysine modification is found at lysine 53.

Belongs to the eukaryotic ribosomal protein eL42 family. In terms of tissue distribution, ubiquitously expressed.

The protein localises to the cytoplasm. The protein is Ribosomal protein eL42-like (RPL36AL) of Homo sapiens (Human).